We begin with the raw amino-acid sequence, 196 residues long: MIPIVIEESGRGERAFDIYSRLLRERIVFLGEPVTSDSANRIVAQLLFLEADDPDKDIFLYINSPGGSVYDGLGIFDTMQHVKPDIHTVCVGLAASMGAFLLCAGAKGKRSSLLHSRIMIHQPLGGARGQASDIRIQADEILFIKDKLNKELSDRTGQPIERIREDTDRDFYMSPSEAIEYGIIDNVFNKRPINSV.

Residue Ser-96 is the Nucleophile of the active site. His-121 is a catalytic residue.

The protein belongs to the peptidase S14 family. In terms of assembly, fourteen ClpP subunits assemble into 2 heptameric rings which stack back to back to give a disk-like structure with a central cavity, resembling the structure of eukaryotic proteasomes.

It is found in the cytoplasm. The catalysed reaction is Hydrolysis of proteins to small peptides in the presence of ATP and magnesium. alpha-casein is the usual test substrate. In the absence of ATP, only oligopeptides shorter than five residues are hydrolyzed (such as succinyl-Leu-Tyr-|-NHMec, and Leu-Tyr-Leu-|-Tyr-Trp, in which cleavage of the -Tyr-|-Leu- and -Tyr-|-Trp bonds also occurs).. In terms of biological role, cleaves peptides in various proteins in a process that requires ATP hydrolysis. Has a chymotrypsin-like activity. Plays a major role in the degradation of misfolded proteins. The sequence is that of ATP-dependent Clp protease proteolytic subunit 1 from Prochlorococcus marinus (strain NATL2A).